A 746-amino-acid chain; its full sequence is Root phototropism protein 3 (746 aa).

A disordered region spans residues 1-24; that stretch reads MMWESESDGGVGVGGGGGREYGDG. The span at 9–19 shows a compositional bias: gly residues; the sequence is GGVGVGGGGGR. A BTB domain is found at 54–122; it reads SDLLVKIGDM…CYGVPVDLTA (69 aa). One can recognise an NPH3 domain in the interval 250–605; the sequence is DWWFEDVSIL…VQVLFSEQVK (356 aa). The tract at residues 461–500 is disordered; sequence EQTEGSSPSRMSPSPSQSMYADIPRGNNNNGGGGGGNNQN. Residues 466–478 are compositionally biased toward low complexity; the sequence is SSPSRMSPSPSQS. Y546 is modified (phosphotyrosine). Residues 708–746 form a disordered region; the sequence is SKLTKMSGQESHDISSGGEQAGVDHPPPRKPRRWRNSIS. The span at 735–746 shows a compositional bias: basic residues; that stretch reads PRKPRRWRNSIS.

This sequence belongs to the NPH3 family. As to quaternary structure, interacts with PKS1, PKS2, RPT2, PHOT1 and PHOT2. Subunit of a complex made of CAR6, PHOT1 and RPT3/NPH3. Post-translationally, phosphorylated in the dark. As to expression, expressed in hypocotyls, guard cells and mesophyll cells.

It localises to the cell membrane. Its pathway is protein modification; protein ubiquitination. May act as a substrate-specific adapter of an E3 ubiquitin-protein ligase complex (CUL3-RBX1-BTB) which mediates the ubiquitination and subsequent proteasomal degradation of target proteins. Signal transducer of the phototropic response and photo-induced movements. Involved in the phot1 pathway under low blue light (LBL) fluence rate and in the phot2 pathway under higher fluence rate of blue light (HBL). Necessary for root and hypocotyl phototropisms, but not for the regulation of stomata opening. Not involved in chloroplast accumulation and translocation. This Arabidopsis thaliana (Mouse-ear cress) protein is Root phototropism protein 3 (RPT3).